The primary structure comprises 311 residues: Pyrimidine-specific ribonucleoside hydrolase RihA (311 aa).

H240 is a catalytic residue.

It belongs to the IUNH family. RihA subfamily.

In terms of biological role, hydrolyzes with equal efficiency cytidine or uridine to ribose and cytosine or uracil, respectively. In Escherichia coli O9:H4 (strain HS), this protein is Pyrimidine-specific ribonucleoside hydrolase RihA.